The chain runs to 255 residues: Ribonuclease HII (255 aa).

The RNase H type-2 domain occupies 70–255 (ELIAGVDEVG…FEPIKSIIKK (186 aa)). A divalent metal cation is bound by residues Asp76, Glu77, and Asp168.

It belongs to the RNase HII family. Requires Mn(2+) as cofactor. Mg(2+) is required as a cofactor.

It is found in the cytoplasm. It carries out the reaction Endonucleolytic cleavage to 5'-phosphomonoester.. Its function is as follows. Endonuclease that specifically degrades the RNA of RNA-DNA hybrids. The polypeptide is Ribonuclease HII (Streptococcus thermophilus (strain ATCC BAA-491 / LMD-9)).